The primary structure comprises 378 residues: Filamin-binding LIM protein 1 (378 aa).

A filamin-binding region spans residues 1-69 (MASKPEKRVA…RSWMPPGRAA (69 aa)). Positions 38-179 (WPGRPWESAP…PPPEEPVSFP (142 aa)) are disordered. Residues 103-115 (LPPPPPPPAADLP) show a composition bias toward pro residues. LIM zinc-binding domains are found at residues 186-247 (DICA…TLEK), 248-305 (CGKC…RKFA), and 306-375 (PVCS…RSAA). A PLEKHC1-binding region spans residues 281 to 378 (IGDESFALDS…HVKRSAAGCC (98 aa)).

Interacts with PLEKHC1, FLNA, FLNB and FLNC. Interacts with NKX2-5.

The protein localises to the cell junction. It localises to the focal adhesion. Its subcellular location is the cytoplasm. It is found in the cytoskeleton. The protein resides in the stress fiber. Serves as an anchoring site for cell-ECM adhesion proteins and filamin-containing actin filaments. Is implicated in cell shape modulation (spreading) and motility. May participate in the regulation of filamin-mediated cross-linking and stabilization of actin filaments. May also regulate the assembly of filamin-containing signaling complexes that control actin assembly. Promotes dissociation of FLNA from ITGB3 and ITGB7. Promotes activation of integrins and regulates integrin-mediated cell-cell adhesion. This Bos taurus (Bovine) protein is Filamin-binding LIM protein 1 (FBLIM1).